The following is a 291-amino-acid chain: Phosphatidylcholine-sterol acyltransferase (291 aa).

An N-linked (GlcNAc...) asparagine glycan is attached at N28. S125 functions as the Nucleophile in the catalytic mechanism. N179 is a glycosylation site (N-linked (GlcNAc...) asparagine). A disulfide bridge links C220 with C263. D252 serves as the catalytic Charge relay system. A glycan (N-linked (GlcNAc...) asparagine) is linked at N280.

This sequence belongs to the AB hydrolase superfamily. Lipase family.

Its subcellular location is the secreted. The enzyme catalyses a sterol + a 1,2-diacyl-sn-glycero-3-phosphocholine = a sterol ester + a 1-acyl-sn-glycero-3-phosphocholine. APOA1 is the most potent activator in plasma. Also activated by APOE, APOC1 and APOA4. Central enzyme in the extracellular metabolism of plasma lipoproteins. Synthesized mainly in the liver and secreted into plasma where it converts cholesterol and phosphatidylcholines (lecithins) to cholesteryl esters and lysophosphatidylcholines on the surface of high and low density lipoproteins (HDLs and LDLs). The cholesterol ester is then transported back to the liver. Has a preference for plasma 16:0-18:2 or 18:O-18:2 phosphatidylcholines. Also produced in the brain by primary astrocytes, and esterifies free cholesterol on nascent APOE-containing lipoproteins secreted from glia and influences cerebral spinal fluid (CSF) APOE- and APOA1 levels. Together with APOE and the cholesterol transporter ABCA1, plays a key role in the maturation of glial-derived, nascent lipoproteins. Required for remodeling high-density lipoprotein particles into their spherical forms. The chain is Phosphatidylcholine-sterol acyltransferase (LCAT) from Myodes glareolus (Bank vole).